The sequence spans 1032 residues: Toll-like receptor 9 (1032 aa).

The first 25 residues, 1–25 (MGFCRSALHPLSLLVQAIMLAMTLA), serve as a signal peptide directing secretion. The Extracellular segment spans residues 26–818 (LGTLPAFLPC…CLDEALSWDC (793 aa)). A disulfide bond links C35 and C45. 47–51 (WLFLK) is a DNA binding site. LRR repeat units lie at residues 62–85 (RGNV…DFAH), 87–110 (PSLR…HFPC), 122–147 (VPTL…SLIS), 150–166 (LSHT…LAGL), 167–190 (HALR…ALEV), 198–221 (LGNL…LPSS), 223–242 (EYLL…DLAN), 243–268 (LTAL…CMEC), 283–306 (LSRL…WFRG), 308–332 (GNLR…AFQG), 333–356 (LTQL…HLSL), 363–386 (LVAL…TLRP), 390–413 (LPML…IFRA), and 415–440 (PGLR…MGEA). An N-linked (GlcNAc...) asparagine glycan is attached at N64. DNA-binding positions include 72-77 (SNRIHH) and 95-109 (KWNC…MHFP). An intrachain disulfide couples C98 to C110. A glycan (N-linked (GlcNAc...) asparagine) is linked at N129. Residue Y132 coordinates DNA. An intrachain disulfide couples C178 to C184. 179 to 181 (YYK) provides a ligand contact to DNA. An N-linked (GlcNAc...) asparagine glycan is attached at N200. Residue Y208 participates in DNA binding. 2 N-linked (GlcNAc...) asparagine glycosylation sites follow: N210 and N242. 2 disulfide bridges follow: C255–C268 and C258–C265. S-palmitoyl cysteine attachment occurs at residues C258 and C265. A glycan (N-linked (GlcNAc...) asparagine) is linked at N300. N-linked (GlcNAc...) asparagine glycosylation occurs at N340. N-linked (GlcNAc...) asparagine glycans are attached at residues N469, N474, and N513. LRR repeat units lie at residues 470–494 (CSTL…MFAQ), 496–519 (SHLQ…QFLP), 520–543 (LTGL…SFTE), 545–572 (PRLE…SFVA), 574–598 (LRTL…LCST), 600–622 (LRAL…LYLH), 627–650 (LSGL…TLRN), 652–675 (PKSL…SLHF), 676–699 (LPKL…SLPA), 701–723 (TRLR…FFSK), 724–747 (AKEL…WFGP), and 749–772 (ASAL…AFMD). A disulfide bond links C470 and C500. N567 carries N-linked (GlcNAc...) asparagine glycosylation. N-linked (GlcNAc...) asparagine glycosylation occurs at N694. N-linked (GlcNAc...) asparagine glycosylation occurs at N731. 2 cysteine pairs are disulfide-bonded: C764–C790 and C766–C809. A helical transmembrane segment spans residues 819-839 (FALSLLAVALGLGVPMLHHLC). At 840–1032 (GWDLWYCFHL…RNFCQGPTAE (193 aa)) the chain is on the cytoplasmic side. The region spanning 868-1013 (LPYDAFVVFD…SFWAQLGMAL (146 aa)) is the TIR domain.

This sequence belongs to the Toll-like receptor family. In terms of assembly, monomer and homodimer. Exists as a monomer in the absence of unmethylated cytidine-phosphate-guanosine (CpG) ligand. Proteolytic processing of an insertion loop (Z-loop) is required for homodimerization upon binding to the unmethylated CpG ligand leading to its activation. Interacts with MYD88 via their respective TIR domains. Interacts with BTK. Interacts (via transmembrane domain) with UNC93B1. Interacts with CD300LH; the interaction may promote full activation of TLR9-triggered innate responses. Interacts with CNPY3 and HSP90B1; this interaction is required for proper folding in the endoplasmic reticulum. Interacts with SMPDL3B. Interacts with CD82; this interaction is essential for TLR9-dependent myddosome formation in response to CpG stimulation. Activated by proteolytic cleavage of the flexible loop between repeats LRR14 and LRR15 within the ectodomain. Cleavage requires UNC93B1. Proteolytically processed by first removing the majority of the ectodomain by either asparagine endopeptidase (AEP) or a cathepsin followed by a trimming event that is solely cathepsin mediated and required for optimal receptor signaling. Post-translationally, palmitoylated by ZDHHC3 in the Golgi regulates TLR9 trafficking from the Golgi to endosomes. Depalmitoylation by PPT1 controls the release of TLR9 from UNC93B1 in endosomes. In terms of tissue distribution, highly expressed in spleen, lymph node, tonsil and peripheral blood leukocytes, especially in plasmacytoid pre-dendritic cells. Levels are much lower in monocytes and CD11c+ immature dendritic cells. Also detected in lung and liver.

Its subcellular location is the endoplasmic reticulum membrane. It is found in the early endosome membrane. The protein resides in the lysosome. It localises to the cytoplasmic vesicle. The protein localises to the phagosome. Its subcellular location is the golgi apparatus membrane. Its function is as follows. Key component of innate and adaptive immunity. TLRs (Toll-like receptors) control host immune response against pathogens through recognition of molecular patterns specific to microorganisms. TLR9 is a nucleotide-sensing TLR which is activated by unmethylated cytidine-phosphate-guanosine (CpG) dinucleotides. Acts via MYD88 and TRAF6, leading to NF-kappa-B activation, cytokine secretion and the inflammatory response. Controls lymphocyte response to Helicobacter infection. Upon CpG stimulation, induces B-cell proliferation, activation, survival and antibody production. The protein is Toll-like receptor 9 (TLR9) of Homo sapiens (Human).